The chain runs to 87 residues: U3-theraphotoxin-Hhn1c (87 aa).

The first 24 residues, 1-24 (MVNMKASMFLTFAGLVLLFVVCHA), serve as a signal peptide directing secretion. Residues 25–52 (SESEEKEFPKEMLSSIFAVDDDFKQEER) constitute a propeptide that is removed on maturation. Cystine bridges form between C54–C67, C61–C72, and C66–C79.

It belongs to the neurotoxin 10 (Hwtx-1) family. 51 (Hntx-8) subfamily. Hntx-8 sub-subfamily. As to expression, expressed by the venom gland.

The protein localises to the secreted. In terms of biological role, ion channel inhibitor. The chain is U3-theraphotoxin-Hhn1c from Cyriopagopus hainanus (Chinese bird spider).